We begin with the raw amino-acid sequence, 83 residues long: High-potential iron-sulfur protein (83 aa).

Residues cysteine 43, cysteine 46, cysteine 61, and cysteine 75 each contribute to the [4Fe-4S] cluster site.

It belongs to the high-potential iron-sulfur protein (HiPIP) family. Homodimer.

It is found in the periplasm. Specific class of high-redox-potential 4Fe-4S ferredoxins. Functions in anaerobic electron transport in most purple and in some other photosynthetic bacteria and in at least one genus (Paracoccus) of halophilic, denitrifying bacteria. The chain is High-potential iron-sulfur protein from Thiocystis violacea.